The following is a 224-amino-acid chain: Enolase-phosphatase E1 (224 aa).

The protein belongs to the HAD-like hydrolase superfamily. MasA/MtnC family. As to quaternary structure, monomer. The cofactor is Mg(2+).

It carries out the reaction 5-methylsulfanyl-2,3-dioxopentyl phosphate + H2O = 1,2-dihydroxy-5-(methylsulfanyl)pent-1-en-3-one + phosphate. It participates in amino-acid biosynthesis; L-methionine biosynthesis via salvage pathway; L-methionine from S-methyl-5-thio-alpha-D-ribose 1-phosphate: step 3/6. Its pathway is amino-acid biosynthesis; L-methionine biosynthesis via salvage pathway; L-methionine from S-methyl-5-thio-alpha-D-ribose 1-phosphate: step 4/6. Bifunctional enzyme that catalyzes the enolization of 2,3-diketo-5-methylthiopentyl-1-phosphate (DK-MTP-1-P) into the intermediate 2-hydroxy-3-keto-5-methylthiopentenyl-1-phosphate (HK-MTPenyl-1-P), which is then dephosphorylated to form the acireductone 1,2-dihydroxy-3-keto-5-methylthiopentene (DHK-MTPene). The protein is Enolase-phosphatase E1 of Thioalkalivibrio sulfidiphilus (strain HL-EbGR7).